A 506-amino-acid polypeptide reads, in one-letter code: ATP synthase subunit alpha (506 aa).

Residue Gly171 to Thr178 coordinates ATP.

It belongs to the ATPase alpha/beta chains family. As to quaternary structure, F-type ATPases have 2 components, CF(1) - the catalytic core - and CF(0) - the membrane proton channel. CF(1) has five subunits: alpha(3), beta(3), gamma(1), delta(1), epsilon(1). CF(0) has three main subunits: a(1), b(2) and c(9-12). The alpha and beta chains form an alternating ring which encloses part of the gamma chain. CF(1) is attached to CF(0) by a central stalk formed by the gamma and epsilon chains, while a peripheral stalk is formed by the delta and b chains.

It is found in the cell inner membrane. The catalysed reaction is ATP + H2O + 4 H(+)(in) = ADP + phosphate + 5 H(+)(out). Its function is as follows. Produces ATP from ADP in the presence of a proton gradient across the membrane. The alpha chain is a regulatory subunit. The sequence is that of ATP synthase subunit alpha from Anaplasma phagocytophilum (strain HZ).